The primary structure comprises 1214 residues: MPRRSARKAQSATASPADTNVVPAKDAPTTNSPPSTTSPNQAAADANQQQAGIVSSQSGPNAVGDSAPSTSVNNDGDIITRPTSDSIAAVANATKPAAVVSDPQSMKVTPIVNPSSYVCNVCNARFSTMSALSEHLRSDHRDDASTLLATPMINNAIRSFLTAWDGIRILSPDVSSKHLSAYLDSAVANGPELIVEDTGLCTSFMLLDNIPSAHLTKELIGFTWFMQMYQMTPPLPEGAVNRIVCMTNWASLGDEGRGLEVRLPPPTDSSVHAYKTVLSRGYIDNAQFNPLALRSNVLLMLLQFTLSNLKINKSSTFTSDVTTITSGRMIRAFEGRPELLALAYPGRAVLPTQTKNAQFLSTAIADRIGRLDRANLIGGEVSAMVECMELCDALTLHIRETYVMLLRSMHQDPTQIVQIVNECANNLLNSTIPISLRPTILCPWFASSEDLRLQQVMHLVNISSNTAAALPLVEALSTLLRSVTPLVLDPTVLTNAITTISESTTQTISPISEILRLLQPMGNDYAAFWKCIASWAYNGLVTTVLSEDAFPDSSQSITHLPSMWKCLFLTLAGPMTSDPHSPVKVFMALANLLAQPEPIAIGVPGMHQTTPASQFSHPGVWPPGFLNPQLINPQQAPLLRAFAEHIRANWPQPSEFGYGSTLQGSANLFIPPNRMVYPWPNQPLPRLTVAPTYDSAMSNWISTTIAFFIRVVNSVNMTATVNDLTRRTMTGVMTAMRQVKTMTPFYIQHMCPTELSVLASVTVTPPFQVPFTRLVQNDVITNVLVARVDPAQRGDAAVDIRATHATFAAALPVDPAAIVVAMLCGQTETNLIPSHHYGKAFAPLFASNAMFTRNQRAVITREAFVCARSAVAQCQDAGFLVPRPLDALRQFDVTSAAAAEIMHAVNDAFKTAFDLDGALLDGLALYGDPRIADLSAAYLQYGGNVVREHVPPGPSHIHRTLQQVESTFMAEMNLFNVARGNLYLVQTATNGNWSPMAPVAAPPFVRGGPNVRVVGRFGTIVPRPDGLEPQLIDDGNVPRDIAGDWVYPSDVLQVSVAVFCDYVWPMVKAGRTRVLVELGHYVYTLHYYDPQISLDEAPILEEWLSKINPAGIPPVPFCIPIPQVYPCITARRVHYAFTSENNNDSLFSTNAASIDTAFGENAAVSPLRWPGLVDPNYRVGTNDLPNRITLYNSLYRYNFTYPTLDGIMYVRSAT.

The disordered stretch occupies residues 1-80 (MPRRSARKAQ…SVNNDGDIIT (80 aa)). The segment covering 8–18 (KAQSATASPAD) has biased composition (polar residues). Low complexity predominate over residues 28–51 (PTTNSPPSTTSPNQAAADANQQQA). The segment at 117 to 140 (YVCNVCNARFSTMSALSEHLRSDH) adopts a C2H2-type zinc-finger fold.

It belongs to the turreted BTV-fold inner capsid family. In terms of assembly, homodecamer; each decamer is made up of two conformers of VP2, called VP2A and VP2B. 12 homodecamers assemble to form an icosahedral capsid. Interacts with VP6.

Its subcellular location is the virion. Functionally, inner capsid protein that self-assembles to form an icosahedral capsid with a T=2 symmetry, which consists of 120 copies of VP2, with channels at each of its five-fold vertices. This capsid constitutes the innermost concentric layer of the viral mature particle. This Notemigonus crysoleucas (Golden shiner) protein is Inner capsid protein VP3 (S3).